We begin with the raw amino-acid sequence, 822 residues long: Telomere length regulation protein TEL2 homolog (822 aa).

Residues N442 to P504 form a disordered region. Residues V465 to G477 show a composition bias toward polar residues. The segment covering S480–T489 has biased composition (acidic residues).

It belongs to the TEL2 family.

The protein resides in the cytoplasm. Its subcellular location is the membrane. It localises to the nucleus. Functionally, regulator of the DNA damage response (DDR). Part of the TTT complex that is required to stabilize protein levels of the phosphatidylinositol 3-kinase-related protein kinase (PIKK) family proteins. Promotes assembly, stabilizes and maintains the activity of TORC complexes, which regulate cell growth and survival in response to nutrient and hormonal signals. May be involved in telomere length regulation. The polypeptide is Telomere length regulation protein TEL2 homolog (telo2) (Danio rerio (Zebrafish)).